A 272-amino-acid chain; its full sequence is Heat stress transcription factor A-7a (272 aa).

Residues 1–26 (MMNPFLPEGCDPPPPPQPMEGLHENA) form a disordered region. Residues 27–121 (PPPFLTKTFE…LLKNIKRRNP (95 aa)) mediate DNA binding. The hydrophobic repeat HR-A/B stretch occupies residues 132–186 (ACNELRREKQVLMMEIVSLRQQQQTTKSYIKAMEQRIEGTERKQRQMMSFLARAM). The short motif at 201–216 (KKIKELEDNESAKRKR) is the Bipartite nuclear localization signal element. Residues 203-212 (IKELEDNESA) show a composition bias toward basic and acidic residues. The disordered stretch occupies residues 203–223 (IKELEDNESAKRKRGSSSMSE). Residues 256-265 (DGFWEELLSD) carry the AHA motif.

This sequence belongs to the HSF family. Class A subfamily. Homotrimer. Post-translationally, exhibits temperature-dependent phosphorylation.

It is found in the nucleus. Its function is as follows. Transcriptional activator that specifically binds DNA sequence 5'-AGAAnnTTCT-3' known as heat shock promoter elements (HSE). In Arabidopsis thaliana (Mouse-ear cress), this protein is Heat stress transcription factor A-7a (HSFA7A).